The following is a 62-amino-acid chain: Small ribosomal subunit protein eS17 (62 aa).

It belongs to the eukaryotic ribosomal protein eS17 family.

The sequence is that of Small ribosomal subunit protein eS17 from Methanoculleus marisnigri (strain ATCC 35101 / DSM 1498 / JR1).